The primary structure comprises 501 residues: NAD(P)H-quinone oxidoreductase chain 4, chloroplastic (501 aa).

14 helical membrane-spanning segments follow: residues 4 to 24, 35 to 55, 84 to 104, 111 to 129, 134 to 154, 168 to 188, 209 to 229, 243 to 263, 273 to 293, 306 to 326, 331 to 351, 387 to 407, 417 to 437, and 463 to 483; these read FPWL…ILFL, YTIC…CYHF, GLSI…TLAA, SRLL…IGSF, LLLF…LLSM, FILY…GMDL, ALEI…SPII, HYST…YGLI, AHSI…IYAA, IAYS…SITD, GAIL…FLAG, LALP…GIIT, ILIT…SLSM, and LFVS…PDFV.

It belongs to the complex I subunit 4 family.

The protein resides in the plastid. The protein localises to the chloroplast thylakoid membrane. The catalysed reaction is a plastoquinone + NADH + (n+1) H(+)(in) = a plastoquinol + NAD(+) + n H(+)(out). The enzyme catalyses a plastoquinone + NADPH + (n+1) H(+)(in) = a plastoquinol + NADP(+) + n H(+)(out). In Buxus microphylla (Littleleaf boxwood), this protein is NAD(P)H-quinone oxidoreductase chain 4, chloroplastic.